A 155-amino-acid chain; its full sequence is Ribosomal RNA large subunit methyltransferase H (155 aa).

Residues Leu-72, Gly-103, and 122–127 (LSPLTL) contribute to the S-adenosyl-L-methionine site.

This sequence belongs to the RNA methyltransferase RlmH family. As to quaternary structure, homodimer.

It is found in the cytoplasm. The enzyme catalyses pseudouridine(1915) in 23S rRNA + S-adenosyl-L-methionine = N(3)-methylpseudouridine(1915) in 23S rRNA + S-adenosyl-L-homocysteine + H(+). Functionally, specifically methylates the pseudouridine at position 1915 (m3Psi1915) in 23S rRNA. This is Ribosomal RNA large subunit methyltransferase H from Haemophilus ducreyi (strain 35000HP / ATCC 700724).